A 329-amino-acid polypeptide reads, in one-letter code: Phenylalanine--tRNA ligase alpha subunit (329 aa).

Position 254 (glutamate 254) interacts with Mg(2+).

The protein belongs to the class-II aminoacyl-tRNA synthetase family. Phe-tRNA synthetase alpha subunit type 1 subfamily. Tetramer of two alpha and two beta subunits. It depends on Mg(2+) as a cofactor.

The protein resides in the cytoplasm. It carries out the reaction tRNA(Phe) + L-phenylalanine + ATP = L-phenylalanyl-tRNA(Phe) + AMP + diphosphate + H(+). The polypeptide is Phenylalanine--tRNA ligase alpha subunit (Histophilus somni (strain 129Pt) (Haemophilus somnus)).